Reading from the N-terminus, the 566-residue chain is Sorting nexin lst-4 (566 aa).

Residues 1 to 61 form the SH3 domain; the sequence is MAQVKAEYDF…PESYVTPYQA (61 aa). The tract at residues 59-179 is disordered; that stretch reads YQASRPPPVL…DRGSNKVNKN (121 aa). Positions 63 to 77 are enriched in pro residues; the sequence is RPPPVLPPPLPPTSS. A compositionally biased stretch (acidic residues) spans 127–140; it reads DDFDDEWTDEDDEQ. Positions 143–154 are enriched in polar residues; sequence TRPNVQSSIGSN. Over residues 155-173 the composition is skewed to basic and acidic residues; it reads SRRDLSRSHSEHGGPDRGS. The region spanning 227-339 is the PX domain; it reads YTCIVDKPKK…HFISCTDEKD (113 aa). In terms of domain architecture, BAR spans 362 to 566; it reads TVPHQPLDPN…KLTSLAARYD (205 aa).

The protein belongs to the sorting nexin family. Homodimer. Isoform d interacts (via SH3 domain) with dyn-1. In terms of tissue distribution, expressed in vulval precursor cells (VPCs) and apoptotic germ cells. Colocalizes with actin, dyn-1 and rab-5 in early phagosomes.

Its subcellular location is the cytoplasm. The protein resides in the cytoplasmic vesicle. The protein localises to the phagosome membrane. Functionally, involved in the signaling of vulval development by acting as a negative regulator of epidermal growth factor receptor (EGFR) signaling. Aids in phagosomal membrane tubule formation which is required for phagosomal fusion with endosomes and lysosomes. Also recruits rab-7 to phagosomes by an interaction with dyn-1. These are events leading to phagosome maturation which is a step in apoptotic cell corpse clearance. Binds phosphatidylinositol-3,4,5-trisphosphate. This Caenorhabditis elegans protein is Sorting nexin lst-4.